The chain runs to 160 residues: DNA polymerase delta subunit 4 (160 aa).

Residues 1–48 (MKKRTTQAKKSGQNTNIRDVFPHVVRSNSSQSHIGKKVSSEQSPTPDV) form a disordered region. Polar residues predominate over residues 8 to 17 (AKKSGQNTNI).

The protein belongs to the DNA polymerase delta subunit 4 family. As to quaternary structure, heterotetramer that consist of the pol3, cdc1, cdc27 and cdm1 subunits. Interacts with cdc1 and pol3.

It localises to the nucleus. In terms of biological role, appears to have a role in the stabilization of the DNA polymerase delta complex. The polypeptide is DNA polymerase delta subunit 4 (cdm1) (Schizosaccharomyces pombe (strain 972 / ATCC 24843) (Fission yeast)).